The sequence spans 94 residues: MSSNVLDTLYSIILDRISNKKEGSYTVKLLEKGKPYIARKVGEEATEVIVASLSEGRERFISEVADLIYHLFVLMAVEGVKPEDVYEELKRRMK.

Belongs to the PRA-PH family.

It localises to the cytoplasm. The enzyme catalyses 1-(5-phospho-beta-D-ribosyl)-ATP + H2O = 1-(5-phospho-beta-D-ribosyl)-5'-AMP + diphosphate + H(+). It functions in the pathway amino-acid biosynthesis; L-histidine biosynthesis; L-histidine from 5-phospho-alpha-D-ribose 1-diphosphate: step 2/9. This Sulfurisphaera tokodaii (strain DSM 16993 / JCM 10545 / NBRC 100140 / 7) (Sulfolobus tokodaii) protein is Phosphoribosyl-ATP pyrophosphatase (hisE).